A 265-amino-acid chain; its full sequence is Phosphatidylglycerol--prolipoprotein diacylglyceryl transferase (265 aa).

Transmembrane regions (helical) follow at residues 11 to 31 (AVSI…FGFI), 56 to 76 (MVTW…ILFY), 91 to 111 (IWHG…AVWL), 120 to 140 (FLSV…FGRI), 173 to 193 (QLYE…WFSG), 198 to 218 (VGAV…AVEF), and 233 to 253 (WLTM…WLLL). Residue arginine 139 coordinates a 1,2-diacyl-sn-glycero-3-phospho-(1'-sn-glycerol).

The protein belongs to the Lgt family.

The protein resides in the cell inner membrane. It carries out the reaction L-cysteinyl-[prolipoprotein] + a 1,2-diacyl-sn-glycero-3-phospho-(1'-sn-glycerol) = an S-1,2-diacyl-sn-glyceryl-L-cysteinyl-[prolipoprotein] + sn-glycerol 1-phosphate + H(+). It participates in protein modification; lipoprotein biosynthesis (diacylglyceryl transfer). Functionally, catalyzes the transfer of the diacylglyceryl group from phosphatidylglycerol to the sulfhydryl group of the N-terminal cysteine of a prolipoprotein, the first step in the formation of mature lipoproteins. This chain is Phosphatidylglycerol--prolipoprotein diacylglyceryl transferase, found in Nitratidesulfovibrio vulgaris (strain DSM 19637 / Miyazaki F) (Desulfovibrio vulgaris).